The sequence spans 472 residues: Keratin, type I cytoskeletal 14 (472 aa).

The segment at 1–114 is head; that stretch reads MTTCSRQFTS…AGGDGLLVGS (114 aa). A coil 1A region spans residues 115–150; it reads EKVTMQNLNDRLASYLDKVRALEEANADLEVKIRDW. The 312-residue stretch at 115 to 426 folds into the IF rod domain; the sequence is EKVTMQNLND…RLLEGEDAHL (312 aa). A linker 1 region spans residues 151 to 168; the sequence is YQRQRPAEIKDYSPYFKT. The coil 1B stretch occupies residues 169–260; that stretch reads IEDLRNKILT…KNHEEEMNAL (92 aa). Residues 261–283 form a linker 12 region; sequence RGQVGGDVNVEMDAAPGVDLSRI. The interval 284 to 422 is coil 2; sequence LNEMRDQYEK…ATYRRLLEGE (139 aa). The segment at 423-472 is tail; the sequence is DAHLSSSQFSSGSQSSRDVTSSSRQIRTKVMDVHDGKVVSTHEQVLRTKN. The segment at 425–472 is interaction with Type I keratins and keratin filaments; it reads HLSSSQFSSGSQSSRDVTSSSRQIRTKVMDVHDGKVVSTHEQVLRTKN. The tract at residues 426–472 is disordered; the sequence is LSSSQFSSGSQSSRDVTSSSRQIRTKVMDVHDGKVVSTHEQVLRTKN. Residues 427-445 are compositionally biased toward low complexity; it reads SSSQFSSGSQSSRDVTSSS. Residue Ser-435 is modified to Phosphoserine.

This sequence belongs to the intermediate filament family. Heterotetramer of two type I and two type II keratins. Forms a disulfide-linked heterodimer (via 2B domains) with KRT5 (via 2B domains). Forms a heterodimer with KRT1; the interaction is more abundant in the absence of KRT5. Interacts with PLEC isoform 1C, when in a heterodimer with KRT5. Interacts with TRADD and with keratin filaments. Associates with other type I keratins. Interacts with EPPK1. Interacts with KLHL24. Interacts with PKP1 (via N-terminus) and PKP2. A disulfide bond is formed between rather than within filaments and promotes the formation of a keratin filament cage around the nucleus. Post-translationally, ubiquitinated by the BCR(KLHL24) E3 ubiquitin ligase complex. Expressed in the corneal epithelium (at protein level). Detected in the basal layer, lowered within the more apically located layers specifically in the stratum spinosum, stratum granulosum but is not detected in stratum corneum. Strongly expressed in the outer root sheath of anagen follicles but not in the germinative matrix, inner root sheath or hair. Found in keratinocytes surrounding the club hair during telogen.

It localises to the cytoplasm. The protein localises to the nucleus. Its function is as follows. The nonhelical tail domain is involved in promoting KRT5-KRT14 filaments to self-organize into large bundles and enhances the mechanical properties involved in resilience of keratin intermediate filaments in vitro. This Homo sapiens (Human) protein is Keratin, type I cytoskeletal 14 (KRT14).